Here is a 333-residue protein sequence, read N- to C-terminus: Acetoin:2,6-dichlorophenolindophenol oxidoreductase subunit alpha (333 aa).

Tetramer of 2 alpha and 2 beta subunits. It depends on thiamine diphosphate as a cofactor.

Its pathway is ketone degradation; acetoin degradation. Its function is as follows. Catalyzes the 2,6-dichlorophenolindophenol-dependent cleavage of acetoin into acetate and acetaldehyde. The alpha subunit is probably the catalytic subunit of the enzyme. This chain is Acetoin:2,6-dichlorophenolindophenol oxidoreductase subunit alpha (acoA), found in Bacillus subtilis (strain 168).